Reading from the N-terminus, the 288-residue chain is Proteasome assembly chaperone 1 (288 aa).

The tract at residues 1-33 is disordered; the sequence is MATFFGEVQSVFSRAVDEEEEDEDDDEEEEEDR. Residues 17–33 are compositionally biased toward acidic residues; sequence DEEEEDEDDDEEEEEDR.

Belongs to the PSMG1 family. Forms a heterodimer with psmg2. In terms of processing, degraded by the proteasome upon completion of 20S proteasome maturation.

It is found in the cytoplasm. Its subcellular location is the endoplasmic reticulum. Chaperone protein which promotes assembly of the 20S proteasome as part of a heterodimer with psmg2. This chain is Proteasome assembly chaperone 1, found in Xenopus laevis (African clawed frog).